The chain runs to 297 residues: Acetyl-coenzyme A carboxylase carboxyl transferase subunit beta (297 aa).

The disordered stretch occupies residues 1–23; that stretch reads MSWIERILGRTSSSSSSSKSKVP. The region spanning 26-295 is the CoA carboxyltransferase N-terminal domain; the sequence is VWTKCTSCEQ…PFKTAELIVE (270 aa). Residues Cys30, Cys33, Cys49, and Cys52 each coordinate Zn(2+). The segment at 30–52 adopts a C4-type zinc-finger fold; the sequence is CTSCEQVLYSEELKRNMHVCPKC.

The protein belongs to the AccD/PCCB family. As to quaternary structure, acetyl-CoA carboxylase is a heterohexamer composed of biotin carboxyl carrier protein (AccB), biotin carboxylase (AccC) and two subunits each of ACCase subunit alpha (AccA) and ACCase subunit beta (AccD). Requires Zn(2+) as cofactor.

It is found in the cytoplasm. It catalyses the reaction N(6)-carboxybiotinyl-L-lysyl-[protein] + acetyl-CoA = N(6)-biotinyl-L-lysyl-[protein] + malonyl-CoA. It participates in lipid metabolism; malonyl-CoA biosynthesis; malonyl-CoA from acetyl-CoA: step 1/1. Component of the acetyl coenzyme A carboxylase (ACC) complex. Biotin carboxylase (BC) catalyzes the carboxylation of biotin on its carrier protein (BCCP) and then the CO(2) group is transferred by the transcarboxylase to acetyl-CoA to form malonyl-CoA. This Actinobacillus pleuropneumoniae serotype 3 (strain JL03) protein is Acetyl-coenzyme A carboxylase carboxyl transferase subunit beta.